A 315-amino-acid polypeptide reads, in one-letter code: MSDSLRIIFAGTPDFAARHLDALLTSGHNVVGVFTQPDRPAGRGKKLMPSPVKVLAEEKGLPVFQPVSLRPQENQQLVADLHADVMVVVAYGLILPKAVLDMPRLGCINVHGSLLPRWRGAAPIQRSLWAGDAETGVTIMQMDVGLDTGDMLYKLACPITAEDTSGSLYNKLAELGPQGLITTLKQLADGTAAPEAQNEALVTHAEKLSKEEARIDWSLSAAQLERCIRAFNPWPMSWLEIDGQPVKVWQASVIEDATQSLPGTILAATKQGIQVATGKGILNLLSLQPAGKKAMSAQDLLNSRREWFIPGNRLA.

113 to 116 (SLLP) is a binding site for (6S)-5,6,7,8-tetrahydrofolate.

This sequence belongs to the Fmt family.

It carries out the reaction L-methionyl-tRNA(fMet) + (6R)-10-formyltetrahydrofolate = N-formyl-L-methionyl-tRNA(fMet) + (6S)-5,6,7,8-tetrahydrofolate + H(+). In terms of biological role, attaches a formyl group to the free amino group of methionyl-tRNA(fMet). The formyl group appears to play a dual role in the initiator identity of N-formylmethionyl-tRNA by promoting its recognition by IF2 and preventing the misappropriation of this tRNA by the elongation apparatus. The chain is Methionyl-tRNA formyltransferase from Salmonella dublin (strain CT_02021853).